The sequence spans 422 residues: Metallocarboxypeptidase A-like protein TRV_02598 (422 aa).

The first 16 residues, 1 to 16, serve as a signal peptide directing secretion; that stretch reads MQSLLLLATLLGSALG. A propeptide spans 17-119 (activation peptide); it reads GAIPSQSANY…ELLTLDGGAN (103 aa). Residues 125–421 form the Peptidase M14 domain; the sequence is SYHKYEDHLK…AGVKAMFSKL (297 aa). Zn(2+) contacts are provided by His185 and Glu188. Substrate-binding positions include 185 to 188, Arg240, and 256 to 257; these read HARE and NR. Cys250 and Cys273 are oxidised to a cystine. Residue His311 participates in Zn(2+) binding. Position 312 to 313 (312 to 313) interacts with substrate; sequence SY. Residue Glu387 is the Proton donor/acceptor of the active site.

The protein belongs to the peptidase M14 family. Requires Zn(2+) as cofactor.

The protein localises to the secreted. Its function is as follows. Extracellular metalloprotease that contributes to pathogenicity. This is Metallocarboxypeptidase A-like protein TRV_02598 from Trichophyton verrucosum (strain HKI 0517).